A 638-amino-acid polypeptide reads, in one-letter code: MDLWQLLLTVALAGSSDAFSGSEATPATLGRASESVQRVHPGLGTNSSGKPKFTKCRSPELETFSCHWTDGVHHGLKSPGSVQLFYIRRNTQEWTQEWKECPDYVSAGENSCYFNSSYTSIWIPYCIKLTNNGGMVDQKCFSVEEIVQPDPPIGLNWTLLNVSLTGIHADIQVRWEPPPNADVQKGWIVLEYELQYKEVNETQWKMMDPVLSTSVPVYSLRLDKEYEVRVRSRQRSSEKYGEFSEVLYVTLPQMSPFTCEEDFRFPWFLIIIFGIFGLTVMLFVFIFSKQQRIKMLILPPVPVPKIKGIDPDLLKEGKLEEVNTILAIQDSYKPEFYNDDSWVEFIELDIDDPDEKTEGSDTDRLLSNSHQKSLSVLAAKDDDSGRTSCYEPDILENDFNASDGCDGNSEVAQPQRLKGEADLLCLDQKNQNNSPYHDVSPAAQQPEVVLAEEDKPRPLLTGEIESTLQAAPSQLSNPNSLANIDFYAQVSDITPAGSVVLSPGQKNKAGNSQCDAHPEVVSLCQTNFIMDNAYFCEADAKKCIAVAPHVDVESRVEPSFNQEDIYITTESLTTTAERSGTAEDAPGSEMPVPDYTSIHLVQSPQGLVLNAATLPLPDKEFLSSCGYVSTDQLNKILP.

A signal peptide spans 1–18 (MDLWQLLLTVALAGSSDA). Residues 19–264 (FSGSEATPAT…SPFTCEEDFR (246 aa)) lie on the Extracellular side of the membrane. Residues 30 to 51 (GRASESVQRVHPGLGTNSSGKP) are disordered. The N-linked (GlcNAc...) asparagine glycan is linked to asparagine 46. 2 cysteine pairs are disulfide-bonded: cysteine 56–cysteine 66 and cysteine 101–cysteine 112. Asparagine 115 is a glycosylation site (N-linked (GlcNAc...) asparagine). Cysteine 126 and cysteine 140 are joined by a disulfide. The Fibronectin type-III domain maps to 151–254 (PPIGLNWTLL…EVLYVTLPQM (104 aa)). Residues asparagine 156, asparagine 161, and asparagine 200 are each glycosylated (N-linked (GlcNAc...) asparagine). Positions 240–244 (YGEFS) match the WSXWS motif motif. The segment at 260–262 (EED) is required for ADAM17-mediated proteolysis. The helical transmembrane segment at 265-288 (FPWFLIIIFGIFGLTVMLFVFIFS) threads the bilayer. Residues 289 to 638 (KQQRIKMLIL…STDQLNKILP (350 aa)) lie on the Cytoplasmic side of the membrane. The required for JAK2 binding stretch occupies residues 294-379 (KMLILPPVPV…HQKSLSVLAA (86 aa)). The Box 1 motif motif lies at 297–305 (ILPPVPVPK). A UbE motif motif is present at residues 340 to 349 (DSWVEFIELD). Residue serine 341 is modified to Phosphoserine. A Phosphotyrosine modification is found at tyrosine 487. The interval 573 to 592 (TTTAERSGTAEDAPGSEMPV) is disordered. Tyrosine 595 is modified (phosphotyrosine).

The protein belongs to the type I cytokine receptor family. Type 1 subfamily. As to quaternary structure, on growth hormone (GH) binding, forms homodimers and binds JAK2 via a box 1-containing domain. Post-translationally, the soluble form (GHBP) is produced by phorbol ester-promoted proteolytic cleavage at the cell surface (shedding) by ADAM17/TACE. Shedding is inhibited by growth hormone (GH) binding to the receptor probably due to a conformational change in GHR rendering the receptor inaccessible to ADAM17. In terms of processing, on GH binding, phosphorylated on tyrosine residues in the cytoplasmic domain by JAK2. Ubiquitinated by the ECS(SOCS2) complex following ligand-binding and phosphorylation by JAK2, leading to its degradation by the proteasome. Regulation by the ECS(SOCS2) complex acts as a negative feedback loop of growth hormone receptor signaling. Ubiquitination is not sufficient for GHR internalization.

The protein localises to the cell membrane. Its subcellular location is the secreted. Its function is as follows. Receptor for pituitary gland growth hormone involved in regulating postnatal body growth. On ligand binding, couples to, and activates the JAK2/STAT5 pathway. In terms of biological role, the soluble form acts as a reservoir of growth hormone in plasma and may be a modulator/inhibitor of GH signaling. In Oryctolagus cuniculus (Rabbit), this protein is Growth hormone receptor.